A 258-amino-acid polypeptide reads, in one-letter code: Isoprenyl transferase (258 aa).

Asp38 is a catalytic residue. Asp38 lines the Mg(2+) pocket. Substrate-binding positions include 39–42, Trp43, Arg51, His55, and 83–85; these read GNGR and STE. The active-site Proton acceptor is Asn86. Residues Trp87, Arg89, Arg206, and 212–214 each bind substrate; that span reads RIS. Glu225 serves as a coordination point for Mg(2+).

This sequence belongs to the UPP synthase family. In terms of assembly, homodimer. The cofactor is Mg(2+).

Its function is as follows. Catalyzes the condensation of isopentenyl diphosphate (IPP) with allylic pyrophosphates generating different type of terpenoids. The chain is Isoprenyl transferase from Bacillus anthracis.